The primary structure comprises 492 residues: 2-succinylbenzoate--CoA ligase (492 aa).

It belongs to the ATP-dependent AMP-binding enzyme family. MenE subfamily.

The catalysed reaction is 2-succinylbenzoate + ATP + CoA = 2-succinylbenzoyl-CoA + AMP + diphosphate. Its pathway is quinol/quinone metabolism; 1,4-dihydroxy-2-naphthoate biosynthesis; 1,4-dihydroxy-2-naphthoate from chorismate: step 5/7. It participates in quinol/quinone metabolism; menaquinone biosynthesis. Converts 2-succinylbenzoate (OSB) to 2-succinylbenzoyl-CoA (OSB-CoA). This chain is 2-succinylbenzoate--CoA ligase, found in Staphylococcus aureus (strain Mu3 / ATCC 700698).